The following is a 433-amino-acid chain: Inositol hexakisphosphate kinase 1 (433 aa).

Residues Glu100–Ser160 form a disordered region. The span at Pro113–His123 shows a compositional bias: basic residues. The span at Ser139–Thr149 shows a compositional bias: polar residues. Positions Lys150 to Ser160 are enriched in basic and acidic residues. A Phosphoserine modification is found at Ser151. Pro220 to Gly228 serves as a coordination point for substrate. A disordered region spans residues Pro362–Pro383. Polar residues predominate over residues Pro366 to Leu375.

It belongs to the inositol phosphokinase (IPK) family.

It is found in the cytoplasm. The protein resides in the nucleus. The enzyme catalyses 1D-myo-inositol hexakisphosphate + ATP = 5-diphospho-1D-myo-inositol 1,2,3,4,6-pentakisphosphate + ADP. It catalyses the reaction 1-diphospho-1D-myo-inositol 2,3,4,5,6-pentakisphosphate + ATP + H(+) = 1,5-bis(diphospho)-1D-myo-inositol 2,3,4,6-tetrakisphosphate + ADP. Functionally, converts inositol hexakisphosphate (InsP6) to diphosphoinositol pentakisphosphate (InsP7/PP-InsP5). Converts 1,3,4,5,6-pentakisphosphate (InsP5) to PP-InsP4. In Rattus norvegicus (Rat), this protein is Inositol hexakisphosphate kinase 1 (Ip6k1).